We begin with the raw amino-acid sequence, 253 residues long: Indole-3-glycerol phosphate synthase (253 aa).

The protein belongs to the TrpC family.

It carries out the reaction 1-(2-carboxyphenylamino)-1-deoxy-D-ribulose 5-phosphate + H(+) = (1S,2R)-1-C-(indol-3-yl)glycerol 3-phosphate + CO2 + H2O. Its pathway is amino-acid biosynthesis; L-tryptophan biosynthesis; L-tryptophan from chorismate: step 4/5. This chain is Indole-3-glycerol phosphate synthase, found in Bacillus anthracis (strain A0248).